Reading from the N-terminus, the 215-residue chain is MMTLALVGEKIDRNRFTGEKVENSTFFNCDFSGADLSGTEFIGCQFYDRESQKGCNFSRANLKDAIFKSCDLSMADFRNINALGIEIRHCRAQGSDFRGASFMNMITTRTWFCSAYITNTNLSYANFSKVVLEKCELWENRWMGTQVLGATFSGSDLSGGEFSSFDWRAANVTHCDLTNSELGDLDIRGVDLQGVKLDSYQASLLLERLGIAVMG.

Pentapeptide repeat domains are found at residues 25-104 and 117-191; these read TFFN…SFMN and ITNT…RGVD.

It belongs to the pentapeptide repeat protein family.

Functionally, probably plays a role in resistance to quinolone antibiotics. Only inhibits ATP-dependent DNA supercoiling by E.coli gyrase at high concentration (30 uM). Protects E.coli gyrase supercoiling activity from inhibition by fluoroquinolones (ciprofloxacin) at 0.1 uM, does not protect M.tuberculosis gyrase activity. The chain is Pentapeptide repeat protein QnrB4 from Escherichia coli.